Reading from the N-terminus, the 271-residue chain is Aminoglycoside 3'-phosphotransferase (271 aa).

Catalysis depends on Asp198, which acts as the Proton acceptor.

The protein belongs to the aminoglycoside phosphotransferase family.

The enzyme catalyses kanamycin A + ATP = kanamycin 3'-phosphate + ADP + H(+). Its function is as follows. Resistance to kanamycin and structurally-related aminoglycosides, including amikacin. This is Aminoglycoside 3'-phosphotransferase (aphA1) from Escherichia coli.